We begin with the raw amino-acid sequence, 330 residues long: GTPase Obg (330 aa).

The 159-residue stretch at 1-159 folds into the Obg domain; sequence MNFIDEVKIC…MWIHLSLKLL (159 aa). Residues 160-327 enclose the OBG-type G domain; sequence SDVGLVGLPN…IVKLALKTIK (168 aa). Residues 166 to 173, 191 to 195, 212 to 215, 279 to 282, and 308 to 310 contribute to the GTP site; these read GLPNAGKS, FTTLV, DIPG, NKCD, and STY. Mg(2+)-binding residues include S173 and T193.

Belongs to the TRAFAC class OBG-HflX-like GTPase superfamily. OBG GTPase family. In terms of assembly, monomer. Mg(2+) is required as a cofactor.

The protein resides in the cytoplasm. An essential GTPase which binds GTP, GDP and possibly (p)ppGpp with moderate affinity, with high nucleotide exchange rates and a fairly low GTP hydrolysis rate. Plays a role in control of the cell cycle, stress response, ribosome biogenesis and in those bacteria that undergo differentiation, in morphogenesis control. The sequence is that of GTPase Obg from Rickettsia felis (strain ATCC VR-1525 / URRWXCal2) (Rickettsia azadi).